Here is a 287-residue protein sequence, read N- to C-terminus: Efem/EfeO family lipoprotein (287 aa).

The N-terminal stretch at 1-17 (MKKLPTILLASSLLLAA) is a signal peptide. A lipid anchor (N-palmitoyl cysteine) is attached at Cys18. A lipid anchor (S-diacylglycerol cysteine) is attached at Cys18. The interval 20-50 (NNSHSDDNSNKDKQSQSSKGENKASLQKATK) is disordered. Positions 23-33 (HSDDNSNKDKQ) are enriched in basic and acidic residues.

It belongs to the EfeM/EfeO family.

It localises to the cell membrane. The sequence is that of Efem/EfeO family lipoprotein from Staphylococcus haemolyticus (strain JCSC1435).